We begin with the raw amino-acid sequence, 197 residues long: Dephospho-CoA kinase (197 aa).

Positions 2–197 constitute a DPCK domain; that stretch reads IIGLTGGIAS…GAIKDLANLV (196 aa). Residue 10 to 15 participates in ATP binding; sequence ASGKST.

The protein belongs to the CoaE family.

It is found in the cytoplasm. The catalysed reaction is 3'-dephospho-CoA + ATP = ADP + CoA + H(+). It participates in cofactor biosynthesis; coenzyme A biosynthesis; CoA from (R)-pantothenate: step 5/5. Its function is as follows. Catalyzes the phosphorylation of the 3'-hydroxyl group of dephosphocoenzyme A to form coenzyme A. The chain is Dephospho-CoA kinase from Streptococcus thermophilus (strain ATCC BAA-250 / LMG 18311).